A 394-amino-acid polypeptide reads, in one-letter code: Na(+)/H(+) antiporter NhaA (394 aa).

Transmembrane regions (helical) follow at residues 17-37 (ILLM…LAGV), 59-79 (LLLW…GLEV), 95-115 (SLPS…YLAF), 124-144 (VGWA…MALL), 154-174 (VFLL…IALF), 177-197 (TDLS…MVAL), 213-233 (FILW…GVII), 261-281 (FMIL…NMTL), 287-307 (PITL…VLLF), 328-348 (IIPV…IASL), and 363-383 (LGIL…LAKV).

This sequence belongs to the NhaA Na(+)/H(+) (TC 2.A.33) antiporter family.

It localises to the cell inner membrane. The enzyme catalyses Na(+)(in) + 2 H(+)(out) = Na(+)(out) + 2 H(+)(in). Functionally, na(+)/H(+) antiporter that extrudes sodium in exchange for external protons. This chain is Na(+)/H(+) antiporter NhaA, found in Shewanella frigidimarina (strain NCIMB 400).